The sequence spans 79 residues: MGGWSSPSHWLIILLIVVLLFGAKKIPELAKGLGKGIKTFKDEMNNDDEVAKNTQKIEENKNTTNNTNADASIDETKKA.

Residues 1–21 (MGGWSSPSHWLIILLIVVLLF) form a helical membrane-spanning segment. Over residues 49-61 (EVAKNTQKIEENK) the composition is skewed to basic and acidic residues. Residues 49–79 (EVAKNTQKIEENKNTTNNTNADASIDETKKA) are disordered.

Belongs to the TatA/E family. The Tat system comprises two distinct complexes: a TatABC complex, containing multiple copies of TatA, TatB and TatC subunits, and a separate TatA complex, containing only TatA subunits. Substrates initially bind to the TatABC complex, which probably triggers association of the separate TatA complex to form the active translocon.

Its subcellular location is the cell inner membrane. In terms of biological role, part of the twin-arginine translocation (Tat) system that transports large folded proteins containing a characteristic twin-arginine motif in their signal peptide across membranes. TatA could form the protein-conducting channel of the Tat system. The chain is Sec-independent protein translocase protein TatA from Campylobacter jejuni subsp. doylei (strain ATCC BAA-1458 / RM4099 / 269.97).